We begin with the raw amino-acid sequence, 359 residues long: MSETSPKLRAELEGIPTYKPGKPAAADGPVAYKLSSNENPYPPLPGVMETVTAAAASFNRYPDMACTSLMAELSDRFGVPLAHLATGTGSVGVAQQLIQATSGPGDEVIYAWRSFEAYPIITQISGARSVQVPLTPGEVHDLDAMADAITDRTRLIFVCNPNNPTGTVVRRAELERFLDRVPSDVLVVLDEAYREFIRDAEVPDGVEFYRERPNVCVLRTFSKAYGLAGLRVGFAIAHEPVAAALRKTAVPFGVSQIAQEAAIASLRAEDELIGRVGSLVCERARVADALRAQGWTVPESQANFVWLRLGERTLAFANACEQAGVVVRPFAGEGVRVTVGESEANDIFLKVSEEFRKEL.

The segment covering M1–L12 has biased composition (basic and acidic residues). A disordered region spans residues M1–G21. Residue K223 is modified to N6-(pyridoxal phosphate)lysine.

Belongs to the class-II pyridoxal-phosphate-dependent aminotransferase family. In terms of assembly, homodimer. Pyridoxal 5'-phosphate is required as a cofactor.

It carries out the reaction an aromatic L-alpha-amino acid + 2-oxoglutarate = an aromatic oxo-acid + L-glutamate. Aminotransferase that catalyzes the conversion of aromatic amino acids and 2-oxoglutarate into corresponding aromatic oxo acids and L-glutamate. The protein is Aromatic amino acid aminotransferase of Streptomyces coelicolor (strain ATCC BAA-471 / A3(2) / M145).